A 344-amino-acid chain; its full sequence is UDP-3-O-acylglucosamine N-acyltransferase (344 aa).

Residue His248 is the Proton acceptor of the active site.

Belongs to the transferase hexapeptide repeat family. LpxD subfamily. In terms of assembly, homotrimer.

The catalysed reaction is a UDP-3-O-[(3R)-3-hydroxyacyl]-alpha-D-glucosamine + a (3R)-hydroxyacyl-[ACP] = a UDP-2-N,3-O-bis[(3R)-3-hydroxyacyl]-alpha-D-glucosamine + holo-[ACP] + H(+). It functions in the pathway bacterial outer membrane biogenesis; LPS lipid A biosynthesis. Its function is as follows. Catalyzes the N-acylation of UDP-3-O-acylglucosamine using 3-hydroxyacyl-ACP as the acyl donor. Is involved in the biosynthesis of lipid A, a phosphorylated glycolipid that anchors the lipopolysaccharide to the outer membrane of the cell. This is UDP-3-O-acylglucosamine N-acyltransferase from Prochlorococcus marinus subsp. pastoris (strain CCMP1986 / NIES-2087 / MED4).